Reading from the N-terminus, the 542-residue chain is Glucose-6-phosphate isomerase (542 aa).

The active-site Proton donor is Glu353. Residues His384 and Lys508 contribute to the active site.

Belongs to the GPI family.

Its subcellular location is the cytoplasm. The enzyme catalyses alpha-D-glucose 6-phosphate = beta-D-fructose 6-phosphate. The protein operates within carbohydrate biosynthesis; gluconeogenesis. It participates in carbohydrate degradation; glycolysis; D-glyceraldehyde 3-phosphate and glycerone phosphate from D-glucose: step 2/4. In terms of biological role, catalyzes the reversible isomerization of glucose-6-phosphate to fructose-6-phosphate. The sequence is that of Glucose-6-phosphate isomerase from Corynebacterium efficiens (strain DSM 44549 / YS-314 / AJ 12310 / JCM 11189 / NBRC 100395).